The primary structure comprises 652 residues: Chaperone protein HtpG (652 aa).

Residues 1–348 (MATDAHKETL…SDDLPLNVSR (348 aa)) form an a; substrate-binding region. The b stretch occupies residues 349 to 565 (ELLQHNPLLD…EYDFGMGMQR (217 aa)). Positions 566–652 (LLKAAGHAMP…EAKSNAARGD (87 aa)) are c.

This sequence belongs to the heat shock protein 90 family. In terms of assembly, homodimer.

Its subcellular location is the cytoplasm. In terms of biological role, molecular chaperone. Has ATPase activity. This chain is Chaperone protein HtpG, found in Alkalilimnicola ehrlichii (strain ATCC BAA-1101 / DSM 17681 / MLHE-1).